We begin with the raw amino-acid sequence, 349 residues long: MKFTFHKVTLKKRFPLAISRGVRYNSENLFVCYEKDGHIGWGEAAPGNSEGAATAEAVQEALENFIATGIEGFSIQELYDRAREMKIPPCAYVALDTAFWDWTAKKAQLPLRQLLGFSKPHTPTSVTIGINPPEVIKERVPLLLEGTTVQSLKIKLGSPEGIDADKTMFEQVVESTKKYPVKLRVDANGGWDVNQAQHMMQWLADRKVDYIEQPLKEGDEAGLKTLFKSRPLPIYVDESCRFSQNIPSFAAHVDGVNMKLMKCGGITEALRIIGTARAHGLKTMIGCMSESSVAIAAAAAMTGGIDHIDLDSHYNLAPDPAHGAPLINGVTLPPEIPGHGAYLKEEFYA.

Residues Thr-127 and 153-155 each bind substrate; that span reads KIK. Residues Asp-186, Glu-212, and Asp-237 each coordinate Mg(2+). Residues Lys-259 and 309–311 contribute to the substrate site; that span reads DLD.

Belongs to the mandelate racemase/muconate lactonizing enzyme family. Mg(2+) serves as cofactor.

Functionally, catalyzes the epimerization a variety of hydrophobic dipeptides. Epimerase activity is highest with L-Ala-L-Tyr, and lower with L-Ala-L-Met, L-Ala-L-Phe, L-Tyr-L-Ala, L-Tyr-L-Met and L-Tyr-L-Trp (in vitro). The chain is Hydrophobic dipeptide epimerase from Flavobacteria bacterium (strain MS024-2A).